The following is a 419-amino-acid chain: Glutamate dehydrogenase (419 aa).

Residue Lys-105 is part of the active site. NAD(+) is bound at residue 219–225; the sequence is GYGNAGY.

This sequence belongs to the Glu/Leu/Phe/Val dehydrogenases family. As to quaternary structure, homohexamer.

Its subcellular location is the cytoplasm. It carries out the reaction L-glutamate + NAD(+) + H2O = 2-oxoglutarate + NH4(+) + NADH + H(+). The catalysed reaction is L-glutamate + NADP(+) + H2O = 2-oxoglutarate + NH4(+) + NADPH + H(+). The polypeptide is Glutamate dehydrogenase (gdhA) (Thermococcus litoralis (strain ATCC 51850 / DSM 5473 / JCM 8560 / NS-C)).